Reading from the N-terminus, the 343-residue chain is Uroporphyrinogen decarboxylase (343 aa).

Residues 23–27 (RQAGR), D73, Y150, S205, and H322 contribute to the substrate site.

The protein belongs to the uroporphyrinogen decarboxylase family. Homodimer.

Its subcellular location is the cytoplasm. It carries out the reaction uroporphyrinogen III + 4 H(+) = coproporphyrinogen III + 4 CO2. The protein operates within porphyrin-containing compound metabolism; protoporphyrin-IX biosynthesis; coproporphyrinogen-III from 5-aminolevulinate: step 4/4. Its function is as follows. Catalyzes the decarboxylation of four acetate groups of uroporphyrinogen-III to yield coproporphyrinogen-III. The sequence is that of Uroporphyrinogen decarboxylase from Cereibacter sphaeroides (strain KD131 / KCTC 12085) (Rhodobacter sphaeroides).